The primary structure comprises 70 residues: Large ribosomal subunit protein eL38 (70 aa).

The protein belongs to the eukaryotic ribosomal protein eL38 family.

The sequence is that of Large ribosomal subunit protein eL38 (rpl-38) from Ostertagia ostertagi (Brown stomach worm).